Consider the following 319-residue polypeptide: ADP-L-glycero-D-manno-heptose-6-epimerase (319 aa).

NADP(+) contacts are provided by residues 10 to 11 (FI), 31 to 32 (DD), Lys38, Lys53, and 79 to 83 (EGACS). The active-site Proton acceptor is Tyr144. Lys148 contacts NADP(+). Asn173 lines the substrate pocket. Residues Val174 and Lys182 each contribute to the NADP(+) site. Lys182 (proton acceptor) is an active-site residue. Substrate contacts are provided by residues Ser184, His191, 205–208 (FEGC), Arg218, and Tyr282.

The protein belongs to the NAD(P)-dependent epimerase/dehydratase family. HldD subfamily. As to quaternary structure, homopentamer. Requires NADP(+) as cofactor.

The enzyme catalyses ADP-D-glycero-beta-D-manno-heptose = ADP-L-glycero-beta-D-manno-heptose. It functions in the pathway nucleotide-sugar biosynthesis; ADP-L-glycero-beta-D-manno-heptose biosynthesis; ADP-L-glycero-beta-D-manno-heptose from D-glycero-beta-D-manno-heptose 7-phosphate: step 4/4. Its function is as follows. Catalyzes the interconversion between ADP-D-glycero-beta-D-manno-heptose and ADP-L-glycero-beta-D-manno-heptose via an epimerization at carbon 6 of the heptose. This is ADP-L-glycero-D-manno-heptose-6-epimerase from Aeromonas salmonicida (strain A449).